We begin with the raw amino-acid sequence, 151 residues long: Ribosome maturation factor RimP (151 aa).

It belongs to the RimP family.

The protein localises to the cytoplasm. Required for maturation of 30S ribosomal subunits. This chain is Ribosome maturation factor RimP, found in Shewanella putrefaciens (strain CN-32 / ATCC BAA-453).